Consider the following 369-residue polypeptide: Methionine import ATP-binding protein MetN 1 (369 aa).

An ABC transporter domain is found at 29 to 265 (IRLHGLGKRY…PRHAVTRSLL (237 aa)). ATP is bound at residue 62 to 69 (GRSGAGKS).

The protein belongs to the ABC transporter superfamily. Methionine importer (TC 3.A.1.24) family. In terms of assembly, the complex is composed of two ATP-binding proteins (MetN), two transmembrane proteins (MetI) and a solute-binding protein (MetQ).

It is found in the cell inner membrane. The enzyme catalyses L-methionine(out) + ATP + H2O = L-methionine(in) + ADP + phosphate + H(+). It carries out the reaction D-methionine(out) + ATP + H2O = D-methionine(in) + ADP + phosphate + H(+). Part of the ABC transporter complex MetNIQ involved in methionine import. Responsible for energy coupling to the transport system. The protein is Methionine import ATP-binding protein MetN 1 of Pseudomonas aeruginosa (strain ATCC 15692 / DSM 22644 / CIP 104116 / JCM 14847 / LMG 12228 / 1C / PRS 101 / PAO1).